A 57-amino-acid chain; its full sequence is uncharacterized protein (57 aa).

This is an uncharacterized protein from Archaeoglobus fulgidus (strain ATCC 49558 / DSM 4304 / JCM 9628 / NBRC 100126 / VC-16).